The chain runs to 1258 residues: Phosphatidylinositol 3,4,5-trisphosphate 5-phosphatase 2 (1258 aa).

Residues 21–117 (WYHRDLSRAA…GLVCALLLPV (97 aa)) form the SH2 domain. Positions 119 to 132 (GEREPDPPDDRDAS) are enriched in basic and acidic residues. Residues 119–180 (GEREPDPPDD…AESAPNGLST (62 aa)) are disordered. Phosphoserine is present on S132. Residues 145-155 (SGSTSISAPTG) show a composition bias toward polar residues. Residues 156 to 166 (PSSPLPAPETP) are compositionally biased toward pro residues. The residue at position 165 (T165) is a Phosphothreonine. A phosphoserine mark is found at S241 and S352. The residue at position 886 (Y886) is a Phosphotyrosine. At S890 the chain carries Phosphoserine. Residues 897–1118 (GAKSKAPSVS…FLGEVASGDD (222 aa)) form a disordered region. A compositionally biased stretch (pro residues) spans 938–950 (PPPTGRPPAPPRA). The short motif at 944–949 (PPAPPR) is the SH3-binding element. A compositionally biased stretch (basic and acidic residues) spans 951 to 965 (APREEPLTPRLKPEG). T958 is modified (phosphothreonine). The short motif at 983–986 (NPAY) is the NPXY motif element. Phosphotyrosine; by SRC is present on Y986. Pro residues-rich tracts occupy residues 996–1007 (LLPPEPPSPARA), 1048–1059 (LPPPDFPPPPLP), and 1087–1104 (GPPPPKAHPRPPLPPGPS). S1131 is subject to Phosphoserine. Y1135 and Y1162 each carry phosphotyrosine. Positions 1196–1258 (LGEAGMSAWL…LLLDTLQLSK (63 aa)) constitute an SAM domain. S1257 bears the Phosphoserine mark.

Belongs to the inositol 1,4,5-trisphosphate 5-phosphatase family. In terms of assembly, interacts with tyrosine phosphorylated form of SHC1. Interacts with EGFR. Upon stimulation by the EGF signaling pathway, it forms a complex with SHC1 and EGFR. Interacts with cytoskeletal protein SORBS3/vinexin, promoting its localization to the periphery of cells. Forms a complex with filamin (FLNA or FLNB), actin, GPIb (GP1BA or GP1BB) that regulates cortical and submembraneous actin. Interacts with c-Met/MET, when c-Met/MET is phosphorylated on 'Tyr-1356'. Interacts with p130Cas/BCAR1. Interacts with CENTD3/ARAP3 via its SAM domain. Interacts with c-Cbl/CBL and CAP/SORBS1. Interacts with activated EPHA2 receptor. Interacts with receptor FCGR2A. Interacts with receptor FCGR2B. Interacts with tyrosine kinase ABL1. Interacts with tyrosine kinase TEC. Interacts with CSF1R. Interacts (via N-terminus) with SH3YL1 (via SH3 domain). Interacts with FCRL6 (tyrosine phosphorylated form). Interacts (via SH2 domain) with tyrosine phosphorylated KLRC1 (via ITIM). Interacts with NEDD9/HEF1. Tyrosine phosphorylated by the members of the SRC family after exposure to a diverse array of extracellular stimuli such as insulin, growth factors such as EGF or PDGF, chemokines, integrin ligands and hypertonic and oxidative stress. May be phosphorylated upon IgG receptor FCGR2B-binding. Phosphorylated at Tyr-986 following cell attachment and spreading. Phosphorylated at Tyr-1162 following EGF signaling pathway stimulation. Phosphorylated at Thr-958 in response to PDGF. As to expression, widely expressed, most prominently in skeletal muscle, heart and brain. Present in platelets. Expressed in transformed myeloid cells and in primary macrophages, but not in peripheral blood monocytes.

The protein localises to the cytoplasm. It is found in the cytosol. The protein resides in the cytoskeleton. Its subcellular location is the membrane. It localises to the cell projection. The protein localises to the filopodium. It is found in the lamellipodium. The protein resides in the basal cell membrane. Its subcellular location is the nucleus. It localises to the nucleus speckle. The protein localises to the spindle pole. It catalyses the reaction a 1,2-diacyl-sn-glycero-3-phospho-(1D-myo-inositol-3,4,5-trisphosphate) + H2O = a 1,2-diacyl-sn-glycero-3-phospho-(1D-myo-inositol-3,4-bisphosphate) + phosphate. The enzyme catalyses 1,2-dioctanoyl-sn-glycero-3-phospho-(1D-myo-inositol-3,4,5-trisphosphate) + H2O = 1,2-dioctanoyl-sn-glycero-3-phospho-(1D-myo-inositol-3,4-bisphosphate) + phosphate. It carries out the reaction 1,2-dihexadecanoyl-sn-glycero-3-phospho-(1D-myo-inositol-3,4,5-trisphosphate) + H2O = 1,2-dihexadecanoyl-sn-glycero-3-phospho-(1D-myo-inositol-3,4-bisphosphate) + phosphate. Activated upon translocation to the sites of synthesis of PtdIns(3,4,5)P3 in the membrane. Enzymatic activity is enhanced in the presence of phosphatidylserine. Its function is as follows. Phosphatidylinositol (PtdIns) phosphatase that specifically hydrolyzes the 5-phosphate of phosphatidylinositol-3,4,5-trisphosphate (PtdIns(3,4,5)P3) to produce PtdIns(3,4)P2, thereby negatively regulating the PI3K (phosphoinositide 3-kinase) pathways. Required for correct mitotic spindle orientation and therefore progression of mitosis. Plays a central role in regulation of PI3K-dependent insulin signaling, although the precise molecular mechanisms and signaling pathways remain unclear. While overexpression reduces both insulin-stimulated MAP kinase and Akt activation, its absence does not affect insulin signaling or GLUT4 trafficking. Confers resistance to dietary obesity. May act by regulating AKT2, but not AKT1, phosphorylation at the plasma membrane. Part of a signaling pathway that regulates actin cytoskeleton remodeling. Required for the maintenance and dynamic remodeling of actin structures as well as in endocytosis, having a major impact on ligand-induced EGFR internalization and degradation. Participates in regulation of cortical and submembraneous actin by hydrolyzing PtdIns(3,4,5)P3 thereby regulating membrane ruffling. Regulates cell adhesion and cell spreading. Required for HGF-mediated lamellipodium formation, cell scattering and spreading. Acts as a negative regulator of EPHA2 receptor endocytosis by inhibiting via PI3K-dependent Rac1 activation. Acts as a regulator of neuritogenesis by regulating PtdIns(3,4,5)P3 level and is required to form an initial protrusive pattern, and later, maintain proper neurite outgrowth. Acts as a negative regulator of the FC-gamma-RIIA receptor (FCGR2A). Mediates signaling from the FC-gamma-RIIB receptor (FCGR2B), playing a central role in terminating signal transduction from activating immune/hematopoietic cell receptor systems. Involved in EGF signaling pathway. Upon stimulation by EGF, it is recruited by EGFR and dephosphorylates PtdIns(3,4,5)P3. Plays a negative role in regulating the PI3K-PKB pathway, possibly by inhibiting PKB activity. Down-regulates Fc-gamma-R-mediated phagocytosis in macrophages independently of INPP5D/SHIP1. In macrophages, down-regulates NF-kappa-B-dependent gene transcription by regulating macrophage colony-stimulating factor (M-CSF)-induced signaling. Plays a role in the localization of AURKA and NEDD9/HEF1 to the basolateral membrane at interphase in polarized cysts, thereby mediates cell cycle homeostasis, cell polarization and cilia assembly. Additionally promotion of cilia growth is also facilitated by hydrolysis of (PtdIns(3,4,5)P3) to PtdIns(3,4)P2. Promotes formation of apical membrane-initiation sites during the initial stages of lumen formation via Rho family-induced actin filament organization and CTNNB1 localization to cell-cell contacts. May also hydrolyze PtdIns(1,3,4,5)P4, and could thus affect the levels of the higher inositol polyphosphates like InsP6. Involved in endochondral ossification. This chain is Phosphatidylinositol 3,4,5-trisphosphate 5-phosphatase 2, found in Homo sapiens (Human).